Consider the following 185-residue polypeptide: Calcium-binding protein K-like (185 aa).

2 EF-hand domains span residues 60–95 (WDEASMVRMFKLFDSDGNGVIDVKEFITALYMMTRA) and 96–131 (PTTDKLGFLFDLFDSDKSGYLEAGEIEKLVNIVVVC). D73, D75, N77, E84, D109, D111, S113, Y115, and E120 together coordinate Ca(2+).

The protein belongs to the recoverin family.

The chain is Calcium-binding protein K-like from Dictyostelium discoideum (Social amoeba).